We begin with the raw amino-acid sequence, 570 residues long: Adenine deaminase 2 (570 aa).

This sequence belongs to the metallo-dependent hydrolases superfamily. Adenine deaminase family. Requires Mn(2+) as cofactor.

It carries out the reaction adenine + H2O + H(+) = hypoxanthine + NH4(+). In Carboxydothermus hydrogenoformans (strain ATCC BAA-161 / DSM 6008 / Z-2901), this protein is Adenine deaminase 2.